We begin with the raw amino-acid sequence, 338 residues long: Anthranilate phosphoribosyltransferase (338 aa).

Residues glycine 80, 83 to 84 (GD), threonine 88, 90 to 93 (NIST), 108 to 116 (KHGNRSVSS), and serine 120 each bind 5-phospho-alpha-D-ribose 1-diphosphate. Glycine 80 lines the anthranilate pocket. Serine 92 contacts Mg(2+). Asparagine 111 contacts anthranilate. Arginine 166 is an anthranilate binding site. Positions 225 and 226 each coordinate Mg(2+).

The protein belongs to the anthranilate phosphoribosyltransferase family. Homodimer. It depends on Mg(2+) as a cofactor.

It catalyses the reaction N-(5-phospho-beta-D-ribosyl)anthranilate + diphosphate = 5-phospho-alpha-D-ribose 1-diphosphate + anthranilate. It functions in the pathway amino-acid biosynthesis; L-tryptophan biosynthesis; L-tryptophan from chorismate: step 2/5. Functionally, catalyzes the transfer of the phosphoribosyl group of 5-phosphorylribose-1-pyrophosphate (PRPP) to anthranilate to yield N-(5'-phosphoribosyl)-anthranilate (PRA). The protein is Anthranilate phosphoribosyltransferase of Desulfatibacillum aliphaticivorans.